The following is a 391-amino-acid chain: F-box only protein 5 (391 aa).

In terms of domain architecture, F-box spans 198–245 (AELFHRDFKHLLTKILRHLSAMDLINVISVSTTWRKILQKDNSAYNSY). A ZBR-type zinc finger spans residues 318–366 (CLKVCVDCSSPAKYDPYLHRATCTRESCKFDFCTLCSCKYHGSKCCQTS). Zn(2+) is bound by residues cysteine 322, cysteine 325, cysteine 340, cysteine 345, cysteine 350, cysteine 353, histidine 358, and cysteine 363. Residues 365–391 (TSKPRSYRVPSEPLPGSKKSKQNLRRL) form a disordered region. Residues 382–391 (KKSKQNLRRL) are compositionally biased toward basic residues.

In terms of assembly, part of a SCF (SKP1-cullin-F-box) protein ligase complex. Interacts with btrc. Interacts with skp1. Interacts with cdc20. Interacts with pin1; stabilizes fbxo5 by preventing its association with btrc in an isomerization-dependent pathway; this interaction is present during G2 phase and prevents fbxo5 degradation. Interacts with plk1. Proteolysed; proteolysis is induced by both cyclin B-cdk1 and cyclin A-cdk1/2 complex through probable phosphorylation. Proteolysis is inhibited by pin1 during G2.

The protein resides in the nucleus. It localises to the cytoplasm. Its subcellular location is the cytoskeleton. The protein localises to the spindle. It is found in the microtubule organizing center. The protein resides in the centrosome. It functions in the pathway protein modification; protein ubiquitination. Functionally, regulates progression through early mitosis by inhibiting the anaphase promoting complex/cyclosome (APC). Binds to the APC activators cdc20 to prevent APC activation. Can also bind directly to the APC to inhibit substrate-binding. Required to arrest unfertilized eggs at metaphase of meiosis II, by preventing their release from metaphase of meiosis II, through inhibition of APC-dependent cyclin B destruction leading to stabilization of cyclin B-cdk1 complex activity. The polypeptide is F-box only protein 5 (Xenopus tropicalis (Western clawed frog)).